A 295-amino-acid polypeptide reads, in one-letter code: Glycine--tRNA ligase alpha subunit (295 aa).

The protein belongs to the class-II aminoacyl-tRNA synthetase family. Tetramer of two alpha and two beta subunits.

Its subcellular location is the cytoplasm. It catalyses the reaction tRNA(Gly) + glycine + ATP = glycyl-tRNA(Gly) + AMP + diphosphate. The sequence is that of Glycine--tRNA ligase alpha subunit from Thermosynechococcus vestitus (strain NIES-2133 / IAM M-273 / BP-1).